We begin with the raw amino-acid sequence, 256 residues long: tRNA-cytidine(32) 2-sulfurtransferase 1 (256 aa).

A PP-loop motif motif is present at residues 38 to 43; that stretch reads SGGKDS. Positions 113, 116, and 204 each coordinate [4Fe-4S] cluster.

This sequence belongs to the TtcA family. As to quaternary structure, homodimer. Requires Mg(2+) as cofactor. The cofactor is [4Fe-4S] cluster.

The protein localises to the cytoplasm. The catalysed reaction is cytidine(32) in tRNA + S-sulfanyl-L-cysteinyl-[cysteine desulfurase] + AH2 + ATP = 2-thiocytidine(32) in tRNA + L-cysteinyl-[cysteine desulfurase] + A + AMP + diphosphate + H(+). The protein operates within tRNA modification. Its function is as follows. Catalyzes the ATP-dependent 2-thiolation of cytidine in position 32 of tRNA, to form 2-thiocytidine (s(2)C32). The sulfur atoms are provided by the cysteine/cysteine desulfurase (IscS) system. This chain is tRNA-cytidine(32) 2-sulfurtransferase 1, found in Francisella philomiragia subsp. philomiragia (strain ATCC 25017 / CCUG 19701 / FSC 153 / O#319-036).